The primary structure comprises 335 residues: DNA-directed RNA polymerase subunit alpha (335 aa).

The interval 1-233 (MIRDEISVSI…DLFIPFLHGE (233 aa)) is alpha N-terminal domain (alpha-NTD). The interval 264-335 (KEKIAFQLIF…KLFAIDPPRN (72 aa)) is alpha C-terminal domain (alpha-CTD).

Belongs to the RNA polymerase alpha chain family. In plastids the minimal PEP RNA polymerase catalytic core is composed of four subunits: alpha, beta, beta', and beta''. When a (nuclear-encoded) sigma factor is associated with the core the holoenzyme is formed, which can initiate transcription.

Its subcellular location is the plastid. The protein resides in the chloroplast. It catalyses the reaction RNA(n) + a ribonucleoside 5'-triphosphate = RNA(n+1) + diphosphate. Its function is as follows. DNA-dependent RNA polymerase catalyzes the transcription of DNA into RNA using the four ribonucleoside triphosphates as substrates. In Pinus thunbergii (Japanese black pine), this protein is DNA-directed RNA polymerase subunit alpha.